The chain runs to 493 residues: Glutamyl-tRNA(Gln) amidotransferase subunit A (493 aa).

Active-site charge relay system residues include Lys78 and Ser158. Ser182 functions as the Acyl-ester intermediate in the catalytic mechanism.

Belongs to the amidase family. GatA subfamily. Heterotrimer of A, B and C subunits.

It carries out the reaction L-glutamyl-tRNA(Gln) + L-glutamine + ATP + H2O = L-glutaminyl-tRNA(Gln) + L-glutamate + ADP + phosphate + H(+). Allows the formation of correctly charged Gln-tRNA(Gln) through the transamidation of misacylated Glu-tRNA(Gln) in organisms which lack glutaminyl-tRNA synthetase. The reaction takes place in the presence of glutamine and ATP through an activated gamma-phospho-Glu-tRNA(Gln). This chain is Glutamyl-tRNA(Gln) amidotransferase subunit A, found in Rickettsia bellii (strain OSU 85-389).